Consider the following 502-residue polypeptide: Keratin, type II cytoskeletal 8 (502 aa).

The tract at residues 1 to 98 (MSVRSTKVTY…DPSIQQVRTE (98 aa)) is head. 4 positions are modified to phosphoserine: Ser13, Ser26, Ser37, and Ser40. Positions 99-134 (EKEQIKTLNNKFASFIDKVRFLEQQNKMLETKWNLL) are coil 1A. The 312-residue stretch at 99 to 410 (EKEQIKTLNN…KLLEGEESRL (312 aa)) folds into the IF rod domain. Positions 135–151 (QNQKTTRSNMDGMFEAY) are linker 1. Residues 152-243 (ISNLRRQLDG…QLYEEELREM (92 aa)) are coil 1B. The linker 12 stretch occupies residues 244–267 (QSQISDTSVVLSMDNNRSLDLDGI). Residues 268-406 (IAEVRAQYED…ATYRKLLEGE (139 aa)) form a coil 2 region. The segment at 269–390 (AEVRAQYEDV…DYQELMNVKL (122 aa)) is necessary for interaction with PNN. The tract at residues 407 to 502 (ESRLESGFQN…SESSDVFSKP (96 aa)) is tail. 4 positions are modified to phosphoserine: Ser425, Ser428, Ser436, and Ser444.

The protein belongs to the intermediate filament family. Heterotetramer of two type I and two type II keratins. Keratin-8 associates with keratin-18. Expressed in oocytes, eggs, embryos, liver and intestinal mucosa.

It is found in the cytoplasm. Its subcellular location is the nucleus. It localises to the nucleoplasm. The protein localises to the nucleus matrix. In terms of biological role, together with KRT19, helps to link the contractile apparatus to dystrophin at the costameres of striated muscle. This Xenopus laevis (African clawed frog) protein is Keratin, type II cytoskeletal 8.